The following is a 399-amino-acid chain: Methylthioribose kinase (399 aa).

Residues asparagine 40, lysine 57, and 111-113 (EDL) contribute to the ATP site. Substrate is bound at residue aspartate 229. 246-248 (DAE) provides a ligand contact to ATP. Arginine 344 provides a ligand contact to substrate.

Belongs to the methylthioribose kinase family. Homodimer.

It catalyses the reaction 5-(methylsulfanyl)-D-ribose + ATP = 5-(methylsulfanyl)-alpha-D-ribose 1-phosphate + ADP + H(+). Its pathway is amino-acid biosynthesis; L-methionine biosynthesis via salvage pathway; S-methyl-5-thio-alpha-D-ribose 1-phosphate from S-methyl-5'-thioadenosine (hydrolase route): step 2/2. Catalyzes the phosphorylation of methylthioribose into methylthioribose-1-phosphate. This is Methylthioribose kinase from Cronobacter sakazakii (strain ATCC BAA-894) (Enterobacter sakazakii).